The following is an 855-amino-acid chain: Discoidin domain-containing receptor 2 (855 aa).

An N-terminal signal peptide occupies residues 1-21 (MILIPRMLLVLFLLLPILSSA). At 22–399 (KAQVNPAICR…MLKVDDSNTR (378 aa)) the chain is on the extracellular side. The F5/8 type C domain maps to 30-185 (CRYPLGMSGG…VCMRVELYGC (156 aa)). 2 cysteine pairs are disulfide-bonded: cysteine 30–cysteine 185 and cysteine 73–cysteine 177. N-linked (GlcNAc...) asparagine glycosylation is found at asparagine 121, asparagine 213, asparagine 261, asparagine 280, and asparagine 372. Residues 400–421 (ILIGCLVAIIFILLAIIVIILW) traverse the membrane as a helical segment. The Cytoplasmic portion of the chain corresponds to 422–855 (RQFWQKMLEK…HLLLLQQGDE (434 aa)). The disordered stretch occupies residues 452–471 (SMFNNNRSSSPSEQGSNSTY). Tyrosine 471 is modified (phosphotyrosine; by SRC and autocatalysis). A Protein kinase domain is found at 563-849 (LTFKEKLGEG…PSFQEIHLLL (287 aa)). ATP is bound by residues 569–577 (LGEGQFGEV) and lysine 608. The Proton acceptor role is filled by aspartate 710. Tyrosine 736, tyrosine 740, and tyrosine 741 each carry phosphotyrosine; by SRC and autocatalysis.

The protein belongs to the protein kinase superfamily. Tyr protein kinase family. Insulin receptor subfamily. In terms of assembly, binds hydroxyproline-rich sequence motifs in fibrillar, glycosylated collagen, such as the GQOGVMGFO motif, where O stands for hydroxyproline. Interacts with SRC. Interacts (tyrosine phosphorylated) with SHC1. Post-translationally, N-glycosylated. Tyrosine phosphorylated in response to collagen binding. Phosphorylated by SRC; this is required for activation and subsequent autophosphorylation on additional tyrosine residues. As to expression, detected in osteocytes, osteoblastic cells in subchondral bone, bone lining cells, tibia and cartilage (at protein level). Detected at high levels in heart and lung, and at low levels in brain, placenta, liver, skeletal muscle, pancreas, and kidney.

It localises to the cell membrane. The enzyme catalyses L-tyrosyl-[protein] + ATP = O-phospho-L-tyrosyl-[protein] + ADP + H(+). With respect to regulation, present in an inactive state in the absence of collagen binding and phosphorylation by SRC. Tyrosine phosphorylation enhances the affinity for ATP and the catalytic activity. Its function is as follows. Tyrosine kinase involved in the regulation of tissues remodeling. It functions as a cell surface receptor for fibrillar collagen and regulates cell differentiation, remodeling of the extracellular matrix, cell migration and cell proliferation. Required for normal bone development. Regulates osteoblast differentiation and chondrocyte maturation via a signaling pathway that involves MAP kinases and leads to the activation of the transcription factor RUNX2. Regulates remodeling of the extracellular matrix by up-regulation of the collagenases MMP1, MMP2 and MMP13, and thereby facilitates cell migration and tumor cell invasion. Promotes fibroblast migration and proliferation, and thereby contributes to cutaneous wound healing. This chain is Discoidin domain-containing receptor 2 (DDR2), found in Homo sapiens (Human).